A 498-amino-acid chain; its full sequence is Germ cell-less protein-like 2 (498 aa).

The Nuclear localization signal signature appears at Ser33–Asn39. One can recognise a BTB domain in the interval Ser90–Thr160.

In terms of assembly, interacts with CUL3.

The protein localises to the nucleus matrix. It participates in protein modification; protein ubiquitination. Its function is as follows. Possible function in spermatogenesis. Probable substrate-specific adapter of an E3 ubiquitin-protein ligase complex which mediates the ubiquitination and subsequent proteasomal degradation of target proteins. The polypeptide is Germ cell-less protein-like 2 (Gmcl2) (Mus musculus (Mouse)).